We begin with the raw amino-acid sequence, 171 residues long: Inosine/xanthosine triphosphatase (171 aa).

8-13 (TTNPAK) contributes to the substrate binding site. E38 and Q68 together coordinate Mg(2+).

This sequence belongs to the YjjX NTPase family. Homodimer. Requires Mg(2+) as cofactor. It depends on Mn(2+) as a cofactor.

The catalysed reaction is XTP + H2O = XDP + phosphate + H(+). It catalyses the reaction ITP + H2O = IDP + phosphate + H(+). Phosphatase that hydrolyzes non-canonical purine nucleotides such as XTP and ITP to their respective diphosphate derivatives. Probably excludes non-canonical purines from DNA/RNA precursor pool, thus preventing their incorporation into DNA/RNA and avoiding chromosomal lesions. The chain is Inosine/xanthosine triphosphatase from Citrobacter koseri (strain ATCC BAA-895 / CDC 4225-83 / SGSC4696).